Reading from the N-terminus, the 485-residue chain is Transcription factor ETV6 (485 aa).

Over residues 1-10 the composition is skewed to polar residues; sequence MSETPAQSSI. The segment at 1 to 32 is disordered; it reads MSETPAQSSIKQERISYTPPESPVASHRSSTP. Lysine 11 carries the post-translational modification N6-acetyllysine; alternate. A Glycyl lysine isopeptide (Lys-Gly) (interchain with G-Cter in SUMO2); alternate cross-link involves residue lysine 11. At threonine 18 the chain carries Phosphothreonine. The residue at position 22 (serine 22) is a Phosphoserine. One can recognise a PNT domain in the interval 41-125; the sequence is ALRMEEDSIH…ELLQHILKQR (85 aa). Residues 157 to 210 form a disordered region; sequence NCVQRTPRTPAESVHHNPPTIELLHRPRSPITTNHRPSPDPEQQRPQRSPLDNM. A Phosphothreonine modification is found at threonine 165. Phosphoserine is present on residues serine 215, serine 240, and serine 251. A Glycyl lysine isopeptide (Lys-Gly) (interchain with G-Cter in SUMO2) cross-link involves residue lysine 284. Lysine 298 carries the N6-acetyllysine; alternate modification. Lysine 298 is covalently cross-linked (Glycyl lysine isopeptide (Lys-Gly) (interchain with G-Cter in SUMO2); alternate). Serine 319 carries the phosphoserine modification. Positions 335-416 form a DNA-binding region, ETS; the sequence is RLLWDYVYQL…PGQRLLFRFM (82 aa). Glycyl lysine isopeptide (Lys-Gly) (interchain with G-Cter in SUMO2) cross-links involve residues lysine 399 and lysine 417. The tract at residues 440 to 485 is disordered; it reads EQTYQEDEPTIASPVGWPRGNLPTGTAGGVMEAGELGVAVKEETRE.

Belongs to the ETS family. As to quaternary structure, can form homodimers or heterodimers with TEL2 or FLI1. Interacts with L3MBTL1 and HDAC9.

Its subcellular location is the nucleus. Transcriptional repressor; binds to the DNA sequence 5'-CCGGAAGT-3'. Plays a role in hematopoiesis and malignant transformation. The polypeptide is Transcription factor ETV6 (Etv6) (Mus musculus (Mouse)).